A 64-amino-acid polypeptide reads, in one-letter code: Large ribosomal subunit protein bL33c (64 aa).

Belongs to the bacterial ribosomal protein bL33 family.

The protein resides in the plastid. The protein localises to the chloroplast. The protein is Large ribosomal subunit protein bL33c of Huperzia lucidula (Shining clubmoss).